The sequence spans 385 residues: Centrosomal protein of 44 kDa (385 aa).

Residues 11-191 (RKLEQRLRTL…TKCYKSALLE (181 aa)) form a binds with microtubules and centrioles region. Positions 194–204 (EEEEPTSDCEE) are enriched in acidic residues. The interval 194–224 (EEEEPTSDCEEDSHLQREMGSPFETAEETPN) is disordered. Coiled coils occupy residues 224-263 (NSEQ…KGKI) and 353-379 (TEES…ELLK).

As to quaternary structure, binds to centriolar microtubules.

It localises to the cytoplasm. The protein resides in the cytoskeleton. The protein localises to the microtubule organizing center. Its subcellular location is the centrosome. It is found in the centriole. It localises to the spindle pole. The protein resides in the midbody. Functionally, centriole-enriched microtubule-binding protein involved in centriole biogenesis. In collaboration with CEP295 and POC1B, is required for the centriole-to-centrosome conversion by ensuring the formation of bona fide centriole wall. Functions as a linker component that maintains centrosome cohesion. Associates with CROCC and regulates its stability and localization to the centrosome. In Xenopus tropicalis (Western clawed frog), this protein is Centrosomal protein of 44 kDa (cep44).